The chain runs to 305 residues: Peroxisome biogenesis factor 2 (305 aa).

The Peroxisomal matrix segment spans residues methionine 1–leucine 15. Residues arginine 16 to histidine 42 traverse the membrane as a helical segment. Topologically, residues glycine 43–leucine 48 are cytoplasmic. The chain crosses the membrane as a helical span at residues leucine 49–alanine 74. Topologically, residues threonine 75 to proline 98 are peroxisomal matrix. Residues serine 99–arginine 125 form a helical membrane-spanning segment. The Cytoplasmic portion of the chain corresponds to asparagine 126–glycine 133. The chain crosses the membrane as a helical span at residues lysine 134–lysine 160. The Peroxisomal matrix segment spans residues glycine 161–glycine 187. A helical transmembrane segment spans residues phenylalanine 188–isoleucine 211. Over asparagine 212–leucine 305 the chain is Cytoplasmic. Zn(2+)-binding residues include cysteine 244, cysteine 247, cysteine 259, histidine 261, cysteine 264, cysteine 267, cysteine 280, and cysteine 283. The segment at cysteine 244 to glycine 284 adopts an RING-type zinc-finger fold.

It belongs to the pex2/pex10/pex12 family. Component of the PEX2-PEX10-PEX12 retrotranslocation channel, composed of PEX2, PEX10 and PEX12. In terms of processing, forms intramolecular and intermolecular disulfide bonds in response to reactive oxygen species (ROS), promoting higher stability.

Its subcellular location is the peroxisome membrane. The enzyme catalyses [E2 ubiquitin-conjugating enzyme]-S-ubiquitinyl-L-cysteine + [acceptor protein]-L-cysteine = [E2 ubiquitin-conjugating enzyme]-L-cysteine + [acceptor protein]-S-ubiquitinyl-L-cysteine.. It catalyses the reaction S-ubiquitinyl-[E2 ubiquitin-conjugating enzyme]-L-cysteine + [acceptor protein]-L-lysine = [E2 ubiquitin-conjugating enzyme]-L-cysteine + N(6)-ubiquitinyl-[acceptor protein]-L-lysine.. The protein operates within protein modification; protein ubiquitination. E3 ubiquitin-protein ligase component of a retrotranslocation channel required for peroxisome organization by mediating export of the PEX5 receptor from peroxisomes to the cytosol, thereby promoting PEX5 recycling. The retrotranslocation channel is composed of PEX2, PEX10 and PEX12; each subunit contributing transmembrane segments that coassemble into an open channel that specifically allows the passage of PEX5 through the peroxisomal membrane. PEX2 also regulates peroxisome organization by acting as a E3 ubiquitin-protein ligase. PEX2 ubiquitinates PEX5 during its passage through the retrotranslocation channel: catalyzes monoubiquitination of PEX5 at 'Cys-11', a modification that acts as a signal for PEX5 extraction into the cytosol. Required for pexophagy in response to starvation by mediating ubiquitination of peroxisomal proteins, such as PEX5 and ABCD3/PMP70. Also involved in the response to reactive oxygen species (ROS) by mediating 'Lys-48'-linked polyubiquitination and subsequent degradation of PNPLA2/ATGL, thereby regulating lipolysis. The polypeptide is Peroxisome biogenesis factor 2 (Mus musculus (Mouse)).